The chain runs to 1220 residues: Diacylglycerol kinase delta (1220 aa).

The interval 1–47 (MAAAAGAPPPGPPQPPPPPPPEESSDSEPEAEPGSPQKLIRKVSTSG) is disordered. The tract at residues 1 to 52 (MAAAAGAPPPGPPQPPPPPPPEESSDSEPEAEPGSPQKLIRKVSTSGQIRQK) is regulates association with membranes. A compositionally biased stretch (pro residues) spans 7-22 (APPPGPPQPPPPPPPE). The PH domain maps to 53–146 (TILKEGMLTK…WIAALKTVQN (94 aa)). 2 Phorbol-ester/DAG-type zinc fingers span residues 163 to 213 (MHNW…TSNC) and 235 to 286 (PHQW…VMKC). Residues 317–451 (SCTSPLLVFV…MLDRWSVMAY (135 aa)) form the DAGKc domain. The disordered stretch occupies residues 554–584 (DDESQASSSLSNPPPTIAEEAEDGDGSGNIC). Positions 1151 to 1214 (WGTEEVAAWL…LCGIKELSRS (64 aa)) constitute an SAM domain.

The protein belongs to the eukaryotic diacylglycerol kinase family. As to quaternary structure, homooligomer. Monomer. Interacts with AP2A2; regulates clathrin-dependent endocytosis. Widely expressed.

The protein localises to the cell membrane. Its subcellular location is the membrane. It is found in the clathrin-coated pit. It localises to the cytoplasm. It catalyses the reaction a 1,2-diacyl-sn-glycerol + ATP = a 1,2-diacyl-sn-glycero-3-phosphate + ADP + H(+). It carries out the reaction 1,2-di-(9Z-octadecenoyl)-sn-glycerol + ATP = 1,2-di-(9Z-octadecenoyl)-sn-glycero-3-phosphate + ADP + H(+). The enzyme catalyses 1-octadecanoyl-2-(5Z,8Z,11Z,14Z-eicosatetraenoyl)-sn-glycerol + ATP = 1-octadecanoyl-2-(5Z,8Z,11Z,14Z-eicosatetraenoyl)-sn-glycero-3-phosphate + ADP + H(+). The protein operates within lipid metabolism; glycerolipid metabolism. Functionally, diacylglycerol kinase that converts diacylglycerol/DAG into phosphatidic acid/phosphatidate/PA and regulates the respective levels of these two bioactive lipids. Thereby, acts as a central switch between the signaling pathways activated by these second messengers with different cellular targets and opposite effects in numerous biological processes. By controlling the levels of diacylglycerol, regulates for instance the PKC and EGF receptor signaling pathways and plays a crucial role during development. May also regulate clathrin-dependent endocytosis. This chain is Diacylglycerol kinase delta, found in Mus musculus (Mouse).